A 253-amino-acid polypeptide reads, in one-letter code: tRNA pseudouridine synthase A (253 aa).

Catalysis depends on D53, which acts as the Nucleophile. Y111 provides a ligand contact to substrate.

This sequence belongs to the tRNA pseudouridine synthase TruA family. Homodimer.

It catalyses the reaction uridine(38/39/40) in tRNA = pseudouridine(38/39/40) in tRNA. In terms of biological role, formation of pseudouridine at positions 38, 39 and 40 in the anticodon stem and loop of transfer RNAs. In Chlorobium luteolum (strain DSM 273 / BCRC 81028 / 2530) (Pelodictyon luteolum), this protein is tRNA pseudouridine synthase A.